A 650-amino-acid polypeptide reads, in one-letter code: MAPGEKIKAKIKKNLPVRGPQAPTIKDLMHWYCMNTNTHGCRRIVVSRGRLRRLLWIAFTLTAVALIIWQCALLVFSFYTVSVSIKVHFQKLDFPAVTICNINPYKYSAVSDLLTDLDSETKQALLSLYGVKESRKRREAGSMPSTLEGTPPRFFKLIPLLVFNENEKGKARDFFTGRKRKISGKIIHKASNVMHVHESKKLVGFQLCSNDTSDCATYTFSSGINAIQEWYKLHYMNIMAQVPLEKKINMSYSAEELLVTCFFDGMSCDARNFTLFHHPMYGNCYTFNNKENATILSTSMGGSEYGLQVILYINEDEYNPFLVSSTGAKVLIHQQNEYPFIEDVGMEIETAMSTSIGMHLTESFKLSEPYSQCTEDGSDVPVTNIYNAAYSLQICLYSCFQTKMVEKCGCAQYSQPLPPAANYCNYQQHPNWMYCYYQLYQAFVREELGCQSVCKQSCSFKEWTLTTSLAQWPSEASEKWLLNVLTWDQSQQINKKLNKTDLAKLLIFYKDLNQRSIMESPANSIEMLLSNFGGQLGLWMSCSVVCVIEIIEVFFIDFFSIIARRQWHKAKDWWARRQTPPSTETPSSRQGQDNPALDTDDDLPTFTSAMRLPPAPGSTVPGTPPPRYNTLRLDRAFSSQLTDTQLTNEL.

The Cytoplasmic segment spans residues 1-55 (MAPGEKIKAKIKKNLPVRGPQAPTIKDLMHWYCMNTNTHGCRRIVVSRGRLRRLL). The helical transmembrane segment at 56–76 (WIAFTLTAVALIIWQCALLVF) threads the bilayer. The Extracellular portion of the chain corresponds to 77–542 (SFYTVSVSIK…GGQLGLWMSC (466 aa)). Intrachain disulfides connect cysteine 100–cysteine 284, cysteine 208–cysteine 215, cysteine 261–cysteine 268, cysteine 373–cysteine 458, cysteine 395–cysteine 454, cysteine 399–cysteine 450, cysteine 408–cysteine 435, and cysteine 410–cysteine 424. The gating release of inhibition by proteolysis (GRIP); protease-sensitive region that is responsible for the proteolytic activation of the channel stretch occupies residues 135 to 222 (RKRREAGSMP…SDCATYTFSS (88 aa)). N-linked (GlcNAc...) asparagine glycosylation is present at asparagine 210. The N-linked (GlcNAc...) asparagine glycan is linked to asparagine 272. The N-linked (GlcNAc...) asparagine glycan is linked to asparagine 498. Residues 543–563 (SVVCVIEIIEVFFIDFFSIIA) form a helical membrane-spanning segment. The Cytoplasmic portion of the chain corresponds to 564-650 (RRQWHKAKDW…LTDTQLTNEL (87 aa)). The interval 577-628 (RQTPPSTETPSSRQGQDNPALDTDDDLPTFTSAMRLPPAPGSTVPGTPPPRY) is disordered. Over residues 579–593 (TPPSTETPSSRQGQD) the composition is skewed to polar residues. The PY motif; mediates interaction, ubiquitination and inhibition by NEDD4 and NEDD4L signature appears at 624-628 (PPPRY). A PY motif; recruits WW domain-containing proteins and is thereby required for ubiquitination and inhibition of the channel by NEDD4 and NEDD4L motif is present at residues 624–628 (PPPRY).

The protein belongs to the amiloride-sensitive sodium channel (TC 1.A.6) family. SCNN1G subfamily. As to quaternary structure, component of the heterotrimeric epithelial sodium channel (ENaC) composed of an alpha/SCNN1A, a beta/SCNN1B and a gamma/SCNN1G subunit. Interacts with WWP1 (via WW domains). Interacts with WWP2 (via WW domains); inhibits the channel. Interacts with the full-length immature form of PCSK9 (pro-PCSK9); inhibits ENaC by promoting its proteasomal degradation. Interacts with BPIFA1; the interaction is indirect via SCNN1B and inhibits the proteolytic maturation of SCNN1A and SCNN1G and the activation of ENaC. Post-translationally, phosphorylated on serine and threonine residues. Aldosterone and insulin increase the basal level of phosphorylation. In terms of processing, ubiquitinated. Can be ubiquitinated at multiple sites and undergo monoubiquitination and polyubiquitination. Ubiquitination by NEDD4 or NEDD4L inhibits the ENaC channel through endocytosis, intracellular retention and degradation of its individual subunits. ENaC is activated through the proteolytic maturation of its subunits. Furin cleaves the SCNN1G subunit first, followed by cleavage by prostasin (PRSS8), which results in a stepwise increase in the open probability of the channel due to the release of an inhibitory tract. BPIFA1, which is recruited by the SCNN1B subunit, prevents the proteolytic activation of ENaC. Post-translationally, N-glycosylated. N-linked glycans are processed to complex type during ENaC complex assembly and transport to the plasma membrane.

It is found in the apical cell membrane. It catalyses the reaction Na(+)(in) = Na(+)(out). Its activity is regulated as follows. Originally identified and characterized by its inhibition by the diuretic drug amiloride. Functionally, this is one of the three pore-forming subunits of the heterotrimeric epithelial sodium channel (ENaC), a critical regulator of sodium balance and fluid homeostasis. ENaC operates in epithelial tissues, where it mediates the electrodiffusion of sodium ions from extracellular fluid through the apical membrane of cells, with water following osmotically. It plays a key role in maintaining sodium homeostasis through electrogenic sodium reabsorption in the kidneys. Additionally, ENaC is essential for airway surface liquid homeostasis, which is crucial for proper mucus clearance. This is Epithelial sodium channel subunit gamma from Rattus norvegicus (Rat).